A 186-amino-acid chain; its full sequence is ATP synthase subunit delta (186 aa).

It belongs to the ATPase delta chain family. As to quaternary structure, F-type ATPases have 2 components, F(1) - the catalytic core - and F(0) - the membrane proton channel. F(1) has five subunits: alpha(3), beta(3), gamma(1), delta(1), epsilon(1). F(0) has three main subunits: a(1), b(2) and c(10-14). The alpha and beta chains form an alternating ring which encloses part of the gamma chain. F(1) is attached to F(0) by a central stalk formed by the gamma and epsilon chains, while a peripheral stalk is formed by the delta and b chains.

Its subcellular location is the cell inner membrane. In terms of biological role, f(1)F(0) ATP synthase produces ATP from ADP in the presence of a proton or sodium gradient. F-type ATPases consist of two structural domains, F(1) containing the extramembraneous catalytic core and F(0) containing the membrane proton channel, linked together by a central stalk and a peripheral stalk. During catalysis, ATP synthesis in the catalytic domain of F(1) is coupled via a rotary mechanism of the central stalk subunits to proton translocation. This protein is part of the stalk that links CF(0) to CF(1). It either transmits conformational changes from CF(0) to CF(1) or is implicated in proton conduction. This Brucella abortus (strain S19) protein is ATP synthase subunit delta.